The following is a 537-amino-acid chain: Cytochrome P450 734A5 (537 aa).

The helical transmembrane segment at 13 to 33 threads the bilayer; it reads GAAAVAVAAAAAWVAVYAAAA. Cys-480 contacts heme.

Belongs to the cytochrome P450 family. Requires heme as cofactor. In terms of tissue distribution, exclusively expressed in roots.

The protein localises to the membrane. Cytochrome P450 probably involved in brassinosteroids (BRs) inactivation and regulation of BRs homeostasis. The polypeptide is Cytochrome P450 734A5 (CYP734A5) (Oryza sativa subsp. japonica (Rice)).